Here is a 498-residue protein sequence, read N- to C-terminus: Polyamine aminopropyltransferase (498 aa).

The next 6 membrane-spanning stretches (helical) occupy residues Ile-7 to Ala-27, Val-35 to Leu-55, Phe-67 to Leu-87, Ile-97 to Leu-117, Val-134 to Ala-154, and Gly-163 to Leu-183. Residues Val-196–Lys-446 form a spermidine synthase region. Positions Thr-200–Gln-439 constitute a PABS domain. Gln-234 provides a ligand contact to S-methyl-5'-thioadenosine. Spermidine is bound by residues His-264 and Asp-288. S-methyl-5'-thioadenosine is bound by residues Asp-308 and Asp-342–Ala-343. The active-site Proton acceptor is the Asp-360.

Belongs to the spermidine/spermine synthase family. As to quaternary structure, homodimer or homotetramer.

The protein localises to the cell membrane. The catalysed reaction is S-adenosyl 3-(methylsulfanyl)propylamine + putrescine = S-methyl-5'-thioadenosine + spermidine + H(+). The protein operates within amine and polyamine biosynthesis; spermidine biosynthesis; spermidine from putrescine: step 1/1. Its function is as follows. Catalyzes the irreversible transfer of a propylamine group from the amino donor S-adenosylmethioninamine (decarboxy-AdoMet) to putrescine (1,4-diaminobutane) to yield spermidine. The chain is Polyamine aminopropyltransferase from Leptospira interrogans serogroup Icterohaemorrhagiae serovar copenhageni (strain Fiocruz L1-130).